A 187-amino-acid chain; its full sequence is Accessory gene regulator protein B (187 aa).

5 consecutive transmembrane segments (helical) span residues 49 to 69 (IAYILNIFIFTLITNISFYLI), 82 to 102 (FWCYIESITLFIVLPLLVLHF), 107 to 127 (TLMMFLALISVGVVIKYAPAA), 143 to 163 (YFSIIISTILFIITLFVKEPY), and 164 to 184 (TQFIQLGIIIQAITLLPIYYS).

Belongs to the AgrB family.

Its subcellular location is the cell membrane. Functionally, essential for the production of a quorum sensing system signal molecule, the autoinducing peptide (AIP). This quorum sensing system is responsible for the regulation of the expression of virulence factor genes. Involved in the proteolytic processing of AgrD, the precursor of AIP. The sequence is that of Accessory gene regulator protein B from Staphylococcus aureus (strain MW2).